We begin with the raw amino-acid sequence, 251 residues long: 4-hydroxy-tetrahydrodipicolinate reductase (251 aa).

NAD(+)-binding positions include 8 to 13 (GAKGRM), 76 to 78 (GTT), and 106 to 109 (APNF). His-136 functions as the Proton donor/acceptor in the catalytic mechanism. His-137 contributes to the (S)-2,3,4,5-tetrahydrodipicolinate binding site. The Proton donor role is filled by Lys-140. Position 146 to 147 (146 to 147 (GT)) interacts with (S)-2,3,4,5-tetrahydrodipicolinate.

It belongs to the DapB family.

The protein resides in the cytoplasm. It catalyses the reaction (S)-2,3,4,5-tetrahydrodipicolinate + NAD(+) + H2O = (2S,4S)-4-hydroxy-2,3,4,5-tetrahydrodipicolinate + NADH + H(+). It carries out the reaction (S)-2,3,4,5-tetrahydrodipicolinate + NADP(+) + H2O = (2S,4S)-4-hydroxy-2,3,4,5-tetrahydrodipicolinate + NADPH + H(+). It functions in the pathway amino-acid biosynthesis; L-lysine biosynthesis via DAP pathway; (S)-tetrahydrodipicolinate from L-aspartate: step 4/4. Its function is as follows. Catalyzes the conversion of 4-hydroxy-tetrahydrodipicolinate (HTPA) to tetrahydrodipicolinate. This Bifidobacterium longum (strain NCC 2705) protein is 4-hydroxy-tetrahydrodipicolinate reductase.